The primary structure comprises 382 residues: MGDWSALGKLLDKVQAYSTAGGKVWLSVLFIFRILLLGTAVESAWGDEQSAFRCNTQQPGCENVCYDKSFPISHVRFWVLQIIFVSVPTLLYLAHVFYVMRKEEKLNKKEEELKVAQTDGVNVEMHLKQIEIKKFKYGIEEHGKVKMRGGLLRTYIISILFKSIFEVAFLLIQWYIYGFSLSAVYTCKRDPCPHQVDCFLSRPTEKTIFIIFMLVVSLVSLALNIIELFYVFFKGVKDRVKGKSDPYHATSGALSPTKDCGSQKYAYFNGCSSPTAPLSPMSPPGYKPVTGDRNNSSCRNYNKQASEQNWANYSAEQNRMGQAGSTISNSHAQPFDFPDDNQNSKKLAAGHELQPLAIVDQRPSSRASSRASSRPRPDDLEI.

At 2 to 23 (GDWSALGKLLDKVQAYSTAGGK) the chain is on the cytoplasmic side. Serine 5 bears the Phosphoserine mark. The chain crosses the membrane as a helical span at residues 24 to 44 (VWLSVLFIFRILLLGTAVESA). Residues 45 to 76 (WGDEQSAFRCNTQQPGCENVCYDKSFPISHVR) are Extracellular-facing. 2 cysteine pairs are disulfide-bonded: cysteine 54–cysteine 192 and cysteine 187–cysteine 198. The helical transmembrane segment at 77 to 97 (FWVLQIIFVSVPTLLYLAHVF) threads the bilayer. Topologically, residues 98 to 155 (YVMRKEEKLNKKEEELKVAQTDGVNVEMHLKQIEIKKFKYGIEEHGKVKMRGGLLRTY) are cytoplasmic. Residue lysine 144 forms a Glycyl lysine isopeptide (Lys-Gly) (interchain with G-Cter in SUMO) linkage. A helical transmembrane segment spans residues 156–176 (IISILFKSIFEVAFLLIQWYI). Residues 177 to 207 (YGFSLSAVYTCKRDPCPHQVDCFLSRPTEKT) are Extracellular-facing. The helical transmembrane segment at 208–228 (IFIIFMLVVSLVSLALNIIEL) threads the bilayer. Topologically, residues 229 to 382 (FYVFFKGVKD…SRPRPDDLEI (154 aa)) are cytoplasmic. Lysine 237 is covalently cross-linked (Glycyl lysine isopeptide (Lys-Gly) (interchain with G-Cter in SUMO)). Residues 244–382 (SDPYHATSGA…SRPRPDDLEI (139 aa)) form an interaction with NOV region. Residue tyrosine 247 is modified to Phosphotyrosine. Serine 255 and serine 262 each carry phosphoserine. The segment at 264-382 (KYAYFNGCSS…SRPRPDDLEI (119 aa)) is interaction with UBQLN4. Cysteine 271 carries the S-nitrosocysteine modification. Phosphothreonine is present on threonine 275. A disordered region spans residues 279–300 (SPMSPPGYKPVTGDRNNSSCRN). Phosphoserine is present on residues serine 306 and serine 314. Over residues 317-332 (QNRMGQAGSTISNSHA) the composition is skewed to polar residues. Residues 317–382 (QNRMGQAGST…SRPRPDDLEI (66 aa)) form a disordered region. Phosphoserine; by CK1 is present on serine 325. At threonine 326 the chain carries Phosphothreonine. Phosphoserine; by CK1 is present on residues serine 328 and serine 330. A phosphoserine mark is found at serine 344 and serine 365. Residues 362-374 (RPSSRASSRASSR) show a composition bias toward low complexity. Phosphoserine; by PKC/PRKCG and PKC/PRKCD is present on serine 368. A phosphoserine mark is found at serine 369 and serine 373.

This sequence belongs to the connexin family. Alpha-type (group II) subfamily. A connexon is composed of a hexamer of connexins. Interacts with SGSM3. Interacts with RIC1/CIP150. Interacts with CNST and CSNK1D. Interacts (via C-terminus) with TJP1. Interacts (via C-terminus) with SRC (via SH3 domain). Interacts (not ubiquitinated) with UBQLN4 (via UBA domain). Interacts with NOV. Interacts with TMEM65. Interacts with ANK3/ANKG and PKP2. Post-translationally, phosphorylation at Ser-325, Ser-328 and Ser-330 by CK1 modulates gap junction assembly. Phosphorylated at Ser-368 by PRKCG; phosphorylation induces disassembly of gap junction plaques and inhibition of gap junction activity. Phosphorylation at Ser-368 by PRKCD triggers its internalization into small vesicles leading to proteasome-mediated degradation. Sumoylated with SUMO1, SUMO2 and SUMO3, which may regulate the level of functional Cx43 gap junctions at the plasma membrane. May be desumoylated by SENP1 or SENP2. In terms of processing, S-nitrosylation at Cys-271 is enriched at the muscle endothelial gap junction in arteries, it augments channel permeability and may regulate of smooth muscle cell to endothelial cell communication. Post-translationally, acetylated in the developing cortex; leading to delocalization from the cell membrane.

It is found in the cell membrane. The protein localises to the cell junction. The protein resides in the gap junction. It localises to the endoplasmic reticulum. Its function is as follows. Gap junction protein that acts as a regulator of bladder capacity. A gap junction consists of a cluster of closely packed pairs of transmembrane channels, the connexons, through which materials of low MW diffuse from one cell to a neighboring cell. May play a critical role in the physiology of hearing by participating in the recycling of potassium to the cochlear endolymph. Negative regulator of bladder functional capacity: acts by enhancing intercellular electrical and chemical transmission, thus sensitizing bladder muscles to cholinergic neural stimuli and causing them to contract. May play a role in cell growth inhibition through the regulation of NOV expression and localization. Plays an essential role in gap junction communication in the ventricles. In Macaca fascicularis (Crab-eating macaque), this protein is Gap junction alpha-1 protein (GJA1).